Consider the following 72-residue polypeptide: uncharacterized protein (72 aa).

This is an uncharacterized protein from Escherichia coli (Bacteriophage T4).